We begin with the raw amino-acid sequence, 198 residues long: Probable opine utilization operon repressor (198 aa).

The protein operates within opine metabolism; mannopine biosynthesis [regulation]. Its function is as follows. Possible repressor for genes for mannityl-opine utilization and / or plasmid conjugative transfer. The polypeptide is Probable opine utilization operon repressor (opnR) (Rhizobium rhizogenes (Agrobacterium rhizogenes)).